A 372-amino-acid chain; its full sequence is NAD(P)H-quinone oxidoreductase subunit 1 (372 aa).

8 helical membrane passes run 27-47 (LIWLPLPMLLVLVAAVVGVLV), 97-117 (LLFTLGPVLVVVPVILSWLIV), 128-148 (VGVGIFLWISLSSVQPIGLLM), 166-186 (AAQSISYEIPLALAVLAVVMM), 204-224 (ILSWNIWRQPVGFLIFWICAL), 266-286 (VLSALLVSVLYLGGWGFPVPV), 308-328 (ATGIVMTVLKAYLLVFIAILL), and 347-367 (FLLPLALVNLLVTAALKLAFP).

It belongs to the complex I subunit 1 family. In terms of assembly, NDH-1 is composed of at least 11 different subunits.

The protein resides in the cellular thylakoid membrane. The enzyme catalyses a plastoquinone + NADH + (n+1) H(+)(in) = a plastoquinol + NAD(+) + n H(+)(out). It catalyses the reaction a plastoquinone + NADPH + (n+1) H(+)(in) = a plastoquinol + NADP(+) + n H(+)(out). In terms of biological role, NDH-1 shuttles electrons from an unknown electron donor, via FMN and iron-sulfur (Fe-S) centers, to quinones in the respiratory and/or the photosynthetic chain. The immediate electron acceptor for the enzyme in this species is believed to be plastoquinone. Couples the redox reaction to proton translocation, and thus conserves the redox energy in a proton gradient. The polypeptide is NAD(P)H-quinone oxidoreductase subunit 1 (Synechococcus sp. (strain WH7803)).